A 77-amino-acid chain; its full sequence is Translational regulator CsrA (77 aa).

The protein belongs to the CsrA/RsmA family. As to quaternary structure, homodimer; the beta-strands of each monomer intercalate to form a hydrophobic core, while the alpha-helices form wings that extend away from the core.

It is found in the cytoplasm. Functionally, a translational regulator that binds mRNA to regulate translation initiation and/or mRNA stability. Usually binds in the 5'-UTR at or near the Shine-Dalgarno sequence preventing ribosome-binding, thus repressing translation. Its main target seems to be the major flagellin gene, while its function is anatagonized by FliW. The protein is Translational regulator CsrA of Desulfitobacterium hafniense (strain Y51).